The following is a 310-amino-acid chain: Methionyl-tRNA formyltransferase (310 aa).

(6S)-5,6,7,8-tetrahydrofolate is bound at residue 109–112 (SLLP).

The protein belongs to the Fmt family.

It carries out the reaction L-methionyl-tRNA(fMet) + (6R)-10-formyltetrahydrofolate = N-formyl-L-methionyl-tRNA(fMet) + (6S)-5,6,7,8-tetrahydrofolate + H(+). Its function is as follows. Attaches a formyl group to the free amino group of methionyl-tRNA(fMet). The formyl group appears to play a dual role in the initiator identity of N-formylmethionyl-tRNA by promoting its recognition by IF2 and preventing the misappropriation of this tRNA by the elongation apparatus. The polypeptide is Methionyl-tRNA formyltransferase (Pseudomonas putida (strain GB-1)).